The chain runs to 87 residues: Small ribosomal subunit protein bS20 (87 aa).

The disordered stretch occupies residues 1-27; it reads MANIKSAKKRAVQSEKRRKHNASRRSM.

Belongs to the bacterial ribosomal protein bS20 family.

In terms of biological role, binds directly to 16S ribosomal RNA. The chain is Small ribosomal subunit protein bS20 from Pectobacterium carotovorum subsp. carotovorum (strain PC1).